The primary structure comprises 561 residues: Putative transport protein CKO_02260 (561 aa).

5 helical membrane passes run 8–28, 32–52, 66–86, 94–114, and 158–178; these read LLNG…LCLG, LGSV…LLGQ, FMLF…SIFF, MLAL…GKLF, and NLSL…IVGA. RCK C-terminal domains follow at residues 200 to 288 and 292 to 373; these read RGLD…SFRN and VFDR…RIGF. 5 helical membrane-spanning segments follow: residues 383 to 403, 406 to 426, 447 to 467, 475 to 495, and 540 to 560; these read LLAF…TFQF, FSFG…LGFL, FGLM…IGNG, MLIA…LFGA, and AIAN…WPGL.

This sequence belongs to the AAE transporter (TC 2.A.81) family. YbjL subfamily.

It localises to the cell membrane. This is Putative transport protein CKO_02260 from Citrobacter koseri (strain ATCC BAA-895 / CDC 4225-83 / SGSC4696).